Consider the following 299-residue polypeptide: tRNA dimethylallyltransferase (299 aa).

11–18 (GPTAVGKT) contacts ATP. Residue 13 to 18 (TAVGKT) coordinates substrate. Residues 36-39 (DSQQ) are interaction with substrate tRNA.

This sequence belongs to the IPP transferase family. Monomer. Requires Mg(2+) as cofactor.

The enzyme catalyses adenosine(37) in tRNA + dimethylallyl diphosphate = N(6)-dimethylallyladenosine(37) in tRNA + diphosphate. Its function is as follows. Catalyzes the transfer of a dimethylallyl group onto the adenine at position 37 in tRNAs that read codons beginning with uridine, leading to the formation of N6-(dimethylallyl)adenosine (i(6)A). In Streptococcus pyogenes serotype M4 (strain MGAS10750), this protein is tRNA dimethylallyltransferase.